Consider the following 596-residue polypeptide: Sensor protein ChvG (596 aa).

The disordered stretch occupies residues 1–22 (MLKKTPETVSDSDDAEERGSER). Residues 1-47 (MLKKTPETVSDSDDAEERGSERRHRIHPLTIIRRIFGNAVFSSLTRR) lie on the Cytoplasmic side of the membrane. A helical membrane pass occupies residues 48-68 (ILFFNVAATVVLVGGILYLNQ). Over 69–283 (FREGLIDARV…VHAERLAIMR (215 aa)) the chain is Periplasmic. Residues 284–304 (VFGIATLVNIVLSLLLSSTIA) traverse the membrane as a helical segment. Residues 301–356 (STIATPLRRLSAAAIRVRRGARTREEIPDFSARQDEIGNLSIALREMTTALYDRID) form the HAMP domain. The Cytoplasmic segment spans residues 305 to 596 (TPLRRLSAAA…SLPAAETHER (292 aa)). Positions 364–592 (DVSHELKNPL…RFTLSLPAAE (229 aa)) constitute a Histidine kinase domain. His-367 is modified (phosphohistidine).

It localises to the cell inner membrane. It catalyses the reaction ATP + protein L-histidine = ADP + protein N-phospho-L-histidine.. Member of a two-component regulatory system ChvG/ChvI. Activates ChvI by phosphorylation (Potential). The polypeptide is Sensor protein ChvG (chvG) (Agrobacterium fabrum (strain C58 / ATCC 33970) (Agrobacterium tumefaciens (strain C58))).